Reading from the N-terminus, the 245-residue chain is MTTLFIADLHLSAERTDITDCFLHFMQQEARNIDALYVLGDLFEMWIGDDDDSPFLQQIKHAFKQLTDSGVPCYFIYGNRDFLIGSRFCQETGMTLLPEHTVIDLYGTPTLILHGDTLCIEDEDYLRYRKRVHNRFIQWLFFCLPLTYRQKVGDKIRSGSSKNNKEKTTSIMDVTPNEVVRLMAEQNVIDMIHGHTHRPDVHHIEVNGKAAIRTVLGDWYHHGSVLVCTPDGCKLETRDFSEKNQ.

Mn(2+) is bound by residues Asp8, His10, Asp41, Asn79, and His114. Asn79–Arg80 is a binding site for substrate. Substrate-binding residues include Asp122, Ser160, Asn164, Lys167, and His195. Residues His195 and His197 each coordinate Mn(2+).

Belongs to the LpxH family. Requires Mn(2+) as cofactor.

The protein resides in the cell inner membrane. It catalyses the reaction UDP-2-N,3-O-bis[(3R)-3-hydroxytetradecanoyl]-alpha-D-glucosamine + H2O = 2-N,3-O-bis[(3R)-3-hydroxytetradecanoyl]-alpha-D-glucosaminyl 1-phosphate + UMP + 2 H(+). The protein operates within glycolipid biosynthesis; lipid IV(A) biosynthesis; lipid IV(A) from (3R)-3-hydroxytetradecanoyl-[acyl-carrier-protein] and UDP-N-acetyl-alpha-D-glucosamine: step 4/6. Its function is as follows. Hydrolyzes the pyrophosphate bond of UDP-2,3-diacylglucosamine to yield 2,3-diacylglucosamine 1-phosphate (lipid X) and UMP by catalyzing the attack of water at the alpha-P atom. Involved in the biosynthesis of lipid A, a phosphorylated glycolipid that anchors the lipopolysaccharide to the outer membrane of the cell. In Photobacterium profundum (strain SS9), this protein is UDP-2,3-diacylglucosamine hydrolase.